The chain runs to 177 residues: ATP synthase subunit delta (177 aa).

The protein belongs to the ATPase delta chain family. F-type ATPases have 2 components, F(1) - the catalytic core - and F(0) - the membrane proton channel. F(1) has five subunits: alpha(3), beta(3), gamma(1), delta(1), epsilon(1). F(0) has three main subunits: a(1), b(2) and c(10-14). The alpha and beta chains form an alternating ring which encloses part of the gamma chain. F(1) is attached to F(0) by a central stalk formed by the gamma and epsilon chains, while a peripheral stalk is formed by the delta and b chains.

The protein localises to the cell inner membrane. F(1)F(0) ATP synthase produces ATP from ADP in the presence of a proton or sodium gradient. F-type ATPases consist of two structural domains, F(1) containing the extramembraneous catalytic core and F(0) containing the membrane proton channel, linked together by a central stalk and a peripheral stalk. During catalysis, ATP synthesis in the catalytic domain of F(1) is coupled via a rotary mechanism of the central stalk subunits to proton translocation. Functionally, this protein is part of the stalk that links CF(0) to CF(1). It either transmits conformational changes from CF(0) to CF(1) or is implicated in proton conduction. This is ATP synthase subunit delta from Vibrio parahaemolyticus serotype O3:K6 (strain RIMD 2210633).